We begin with the raw amino-acid sequence, 322 residues long: Cytochrome c biogenesis protein CcsA (322 aa).

8 helical membrane-spanning segments follow: residues 9 to 29 (ILTH…LITL), 44 to 64 (GMIT…IFLG), 71 to 91 (LYES…VPYF), 97 to 117 (FLSA…TSGL), 143 to 163 (MILG…FLVI), 225 to 245 (IISI…VWAN), 254 to 274 (WDPK…YFHI), and 286 to 306 (AIVA…VNLL).

It belongs to the CcmF/CycK/Ccl1/NrfE/CcsA family. As to quaternary structure, may interact with Ccs1.

It localises to the plastid. The protein localises to the chloroplast thylakoid membrane. Its function is as follows. Required during biogenesis of c-type cytochromes (cytochrome c6 and cytochrome f) at the step of heme attachment. This chain is Cytochrome c biogenesis protein CcsA, found in Manihot esculenta (Cassava).